The sequence spans 772 residues: MTAKSAAAAARATVYGYPRQGRGRELKKAIEGYWKGRLDADALRTTATGLRRDTWQQLAEAGIHEVPTGDFSYYDHVLDTSVMVGAIPARHRAAVEADALDGYFAMARGTQDVAPLEMTKWFDTNYHYLVPELGPDTVFSTDSAKQVAELGEALALGLTARPVLVGPVTYLLLAKPAPGVAADFDPLTLLDRLLPVYAEVLADLRAAGAEWVQLDEPALVQDRTPAELNAAERAYRVLGGLTDRPKLLVASYFDRLGDALPVLAEAPVEGLALDFAEGAAANLDALAAVGGLPGKRLVAGVVDGRNIWVNDLEKSLALLGTLLGLADRVDVAASCSLLHVPLDAAAERDIAPQVLRWLAFARQKTAEIVTLAKGLGHGTDAIAAQLAANRADLVSRADSALTRDPAVRSRTAATTDADARRSGPYPERAAAQRARLGLPLLPTTTIGSFPQTAELRTARADLRAGRIDSAGYEERIRAEIGEVISFQEKAGLDVLVHGEAERNDMVQYFAERLTGYLTTQHGWVQSYGTRYVRPPVLAGDISRPEPMTVPWTTYAQSLTDRPVKGMLTGPVTMLAWSFVRDDQPLGETARQVALALRDEVGDLEAAGTSVIQVDEPALRETLPLRAADRPAYLAWATEAFRLTTGGVRPDTQIHTHMCYAEFGDIVQAIDDLDADVISLEAARSHMQVARELAEHAYPREAGPGVYDIHSPRVPGVDETAALLRKGLEAIPAERLWVNPDCGLKTRGWPETRASLENLVAAARTVRAEHAGS.

5-methyltetrahydropteroyltri-L-glutamate contacts are provided by residues Arg-24 to Lys-27 and Lys-120. The segment at Asp-404–Arg-428 is disordered. Residues Ile-446–Ser-448 and Glu-499 each bind L-homocysteine. Residues Ile-446–Ser-448 and Glu-499 contribute to the L-methionine site. 5-methyltetrahydropteroyltri-L-glutamate is bound at residue Trp-576. Asp-614 provides a ligand contact to L-homocysteine. Residue Asp-614 participates in L-methionine binding. Glu-620 serves as a coordination point for 5-methyltetrahydropteroyltri-L-glutamate. 3 residues coordinate Zn(2+): His-656, Cys-658, and Glu-680. His-709 serves as the catalytic Proton donor. Cys-741 lines the Zn(2+) pocket.

This sequence belongs to the vitamin-B12 independent methionine synthase family. The cofactor is Zn(2+).

It carries out the reaction 5-methyltetrahydropteroyltri-L-glutamate + L-homocysteine = tetrahydropteroyltri-L-glutamate + L-methionine. The protein operates within amino-acid biosynthesis; L-methionine biosynthesis via de novo pathway; L-methionine from L-homocysteine (MetE route): step 1/1. Functionally, catalyzes the transfer of a methyl group from 5-methyltetrahydrofolate to homocysteine resulting in methionine formation. This Streptomyces avermitilis (strain ATCC 31267 / DSM 46492 / JCM 5070 / NBRC 14893 / NCIMB 12804 / NRRL 8165 / MA-4680) protein is 5-methyltetrahydropteroyltriglutamate--homocysteine methyltransferase.